Reading from the N-terminus, the 692-residue chain is Protein arginine N-methyltransferase 7 (692 aa).

SAM-dependent MTase PRMT-type domains are found at residues Ser-14–Trp-345 and Ser-358–Glu-684. At Arg-32 the chain carries Omega-N-methylarginine. Residues Glu-144 and Glu-153 contribute to the active site.

The protein belongs to the class I-like SAM-binding methyltransferase superfamily. Protein arginine N-methyltransferase family. PRMT7 subfamily. Homodimer and heterodimer. Interacts with PRMT5 and SNRPD3. Interacts with CTCFL.

The protein resides in the cytoplasm. It localises to the cytosol. Its subcellular location is the nucleus. The catalysed reaction is L-arginyl-[protein] + S-adenosyl-L-methionine = N(omega)-methyl-L-arginyl-[protein] + S-adenosyl-L-homocysteine + H(+). Its function is as follows. Arginine methyltransferase that can both catalyze the formation of omega-N monomethylarginine (MMA) and symmetrical dimethylarginine (sDMA), with a preference for the formation of MMA. Specifically mediates the symmetrical dimethylation of arginine residues in the small nuclear ribonucleoproteins Sm D1 (SNRPD1) and Sm D3 (SNRPD3); such methylation being required for the assembly and biogenesis of snRNP core particles. Specifically mediates the symmetric dimethylation of histone H4 'Arg-3' to form H4R3me2s. Plays a role in gene imprinting by being recruited by CTCFL at the H19 imprinted control region (ICR) and methylating histone H4 to form H4R3me2s, possibly leading to recruit DNA methyltransferases at these sites. May also play a role in embryonic stem cell (ESC) pluripotency. Also able to mediate the arginine methylation of histone H2A and myelin basic protein (MBP) in vitro; the relevance of such results is however unclear in vivo. The sequence is that of Protein arginine N-methyltransferase 7 (Prmt7) from Mus musculus (Mouse).